The primary structure comprises 470 residues: Probable citrate synthase, mitochondrial (470 aa).

Residues H297, H351, and D406 contribute to the active site.

Belongs to the citrate synthase family. In terms of assembly, homodimer.

Its subcellular location is the mitochondrion matrix. The enzyme catalyses oxaloacetate + acetyl-CoA + H2O = citrate + CoA + H(+). It functions in the pathway carbohydrate metabolism; tricarboxylic acid cycle; isocitrate from oxaloacetate: step 1/2. This Leishmania major protein is Probable citrate synthase, mitochondrial.